Reading from the N-terminus, the 137-residue chain is Acidic phospholipase A2 VP8 (137 aa).

The first 16 residues, 1–16 (MRILWIVAVCLIGVEG), serve as a signal peptide directing secretion. Disulfide bonds link C41/C130, C43/C59, C58/C110, C64/C137, C65/C103, C72/C96, and C90/C101. Y42, G44, and G46 together coordinate Ca(2+). Residue H62 is part of the active site. A Ca(2+)-binding site is contributed by D63. The active site involves D104.

It belongs to the phospholipase A2 family. Group II subfamily. D49 sub-subfamily. In terms of assembly, does not form a complex. Ca(2+) serves as cofactor. As to expression, expressed by the venom gland.

The protein localises to the secreted. The enzyme catalyses a 1,2-diacyl-sn-glycero-3-phosphocholine + H2O = a 1-acyl-sn-glycero-3-phosphocholine + a fatty acid + H(+). Functionally, snake venom phospholipase A2 (PLA2) that is not toxic by itself, but the synergistical mixture of a basic and this acidic protein is lethal. PLA2 catalyzes the calcium-dependent hydrolysis of the 2-acyl groups in 3-sn-phosphoglycerides. In Daboia palaestinae (Palestine viper), this protein is Acidic phospholipase A2 VP8.